A 154-amino-acid chain; its full sequence is MAARVCCQLDPARDVLCLRPVGAESRGRPVSGPFGPLPSPSSSAVPADHGARLSLRGLPVCAFSSAGPCALRFTSARRMETTVNAHQVLPKVLHKRTLGLSAMSTTDLEAYFKDCLFKDWEELGEEIRLMVFVLGGCRHKLVCSPAPCNFFTSA.

The segment at 68–117 (PCALRFTSARRMETTVNAHQVLPKVLHKRTLGLSAMSTTDLEAYFKDCLF) is mitochondrial targeting sequence.

It belongs to the orthohepadnavirus protein X family. In terms of assembly, may form homodimer. May interact with host CEBPA, CFLAR, CREB1, DDB1, E4F1, HBXIP, HSPD1/HSP60, NFKBIA, POLR2E and SMAD4. Interacts with host SMC5-SMC6 complex and induces its degradation. Interacts with host TRPC4AP; leading to prevent ubiquitination of TRPC4AP. Interacts with host PLSCR1; this interaction promotes ubiquitination and degradation of HBx and impairs HBx-mediated cell proliferation. A fraction may be phosphorylated in insect cells and HepG2 cells, a human hepatoblastoma cell line. Phosphorylated in vitro by host protein kinase C or mitogen-activated protein kinase. N-acetylated in insect cells.

It localises to the host cytoplasm. The protein resides in the host nucleus. Its subcellular location is the host mitochondrion. Its function is as follows. Multifunctional protein that plays a role in silencing host antiviral defenses and promoting viral transcription. Does not seem to be essential for HBV infection. May be directly involved in development of cirrhosis and liver cancer (hepatocellular carcinoma). Most of cytosolic activities involve modulation of cytosolic calcium. The effect on apoptosis is controversial depending on the cell types in which the studies have been conducted. May induce apoptosis by localizing in mitochondria and causing loss of mitochondrial membrane potential. May also modulate apoptosis by binding host CFLAR, a key regulator of the death-inducing signaling complex (DISC). Promotes viral transcription by using the host E3 ubiquitin ligase DDB1 to target the SMC5-SMC6 complex to proteasomal degradation. This host complex would otherwise bind to viral episomal DNA, and prevents its transcription. Moderately stimulates transcription of many different viral and cellular transcription elements. Promoters and enhancers stimulated by HBx contain DNA binding sites for NF-kappa-B, AP-1, AP-2, c-EBP, ATF/CREB, or the calcium-activated factor NF-AT. The chain is Protein X from Hepatitis B virus genotype C subtype adr (isolate Japan/Nishioka/1983) (HBV-C).